The primary structure comprises 180 residues: Inosine/xanthosine triphosphatase (180 aa).

Position 8-13 (8-13) interacts with substrate; sequence TTNPAK. D38 contributes to the Mg(2+) binding site.

It belongs to the YjjX NTPase family. Homodimer. Mg(2+) serves as cofactor. The cofactor is Mn(2+).

It carries out the reaction XTP + H2O = XDP + phosphate + H(+). The catalysed reaction is ITP + H2O = IDP + phosphate + H(+). In terms of biological role, phosphatase that hydrolyzes non-canonical purine nucleotides such as XTP and ITP to their respective diphosphate derivatives. Probably excludes non-canonical purines from DNA/RNA precursor pool, thus preventing their incorporation into DNA/RNA and avoiding chromosomal lesions. The chain is Inosine/xanthosine triphosphatase from Yersinia pseudotuberculosis serotype O:1b (strain IP 31758).